A 363-amino-acid chain; its full sequence is Protein-arginine kinase (363 aa).

The Phosphagen kinase C-terminal domain maps to 24 to 254 (IVLSSRIRLA…AQLIEQERSA (231 aa)). 27–31 (SSRIR) contributes to the ATP binding site. Phosphoarginine; by autocatalysis occurs at positions 29, 40, and 86. Residues H92, R125, and 176–180 (RASVM) contribute to the ATP site. Position 190 is a phosphoarginine; by autocatalysis (R190). 207–212 (RGIYGE) is an ATP binding site. A phosphoarginine; by autocatalysis mark is found at R255, R269, and R272. An RDXXRA motif of the pArg binding pocket involved in allosteric regulation motif is present at residues 337–342 (RDIRRA). Residue R346 is modified to Phosphoarginine; by autocatalysis.

This sequence belongs to the ATP:guanido phosphotransferase family. Interacts with CtsR in its autophosphorylated form. Interacts with McsA in nonstressed as well as in heat-stressed cells, whereas strongly interacts with ClpC only in nonstressed cells. Post-translationally, autophosphorylated on Arg residues. Phosphorylation on Arg-40 and Arg-86 are up-regulated upon stress conditions.

It localises to the cytoplasm. The catalysed reaction is L-arginyl-[protein] + ATP = N(omega)-phospho-L-arginyl-[protein] + ADP + H(+). With respect to regulation, appears to be allosterically activated by the binding of pArg-containing polypeptides to the pArg-binding pocket localized in the C-terminal domain of McsB. The McsB kinase is inhibited in nonstressed cells by direct interaction with ClpC; upon heat exposure, the interaction of McsB with ClpC is dramatically decreased, leading to McsB release and activation during heat stress. Its kinase activity is counteracted by the protein-arginine-phosphatase YwlE in vivo. Requires McsA for full kinase activity. Its function is as follows. Catalyzes the specific phosphorylation of arginine residues in a large number of proteins. Is part of the bacterial stress response system, where it is involved in regulating the global heat shock repressor CtsR; phosphorylates arginine residues in the winged helix-turn-helix domain of CtsR, thereby preventing its binding to DNA and consequently inducing the expression of repressed genes. The transcriptional repressor HrcA, the chaperone GroEL, the unfoldase ClpC, together with several ribosomal subunits, represent other physiological targets of McsB under stress conditions. Protein arginine phosphorylation has a physiologically important role and is involved in the regulation of many critical cellular processes, such as protein homeostasis, motility, competence, and stringent and stress responses, by regulating gene expression and protein activity. Functions as an adapter whose kinase activity is required for ClpCP-mediated degradation of CtsR during heat stress. Is required for the delocalization of competence proteins from the cell poles, probably via a role in the degradation of anchor proteins. The protein is Protein-arginine kinase of Bacillus subtilis (strain 168).